Here is a 496-residue protein sequence, read N- to C-terminus: L-arabinose isomerase (496 aa).

4 residues coordinate Mn(2+): Glu306, Glu331, His348, and His447.

The protein belongs to the arabinose isomerase family. In terms of assembly, homotetramer. The cofactor is Mn(2+).

It catalyses the reaction beta-L-arabinopyranose = L-ribulose. It participates in carbohydrate degradation; L-arabinose degradation via L-ribulose; D-xylulose 5-phosphate from L-arabinose (bacterial route): step 1/3. With respect to regulation, inhibited by copper. Its function is as follows. Catalyzes the conversion of L-arabinose to L-ribulose. In vitro, converts D-galactose into D-tagatose. This is L-arabinose isomerase (araA) from Geobacillus stearothermophilus (Bacillus stearothermophilus).